The sequence spans 206 residues: Large ribosomal subunit protein mL62 (206 aa).

A mitochondrion-targeting transit peptide spans 1–29 (MATAWGLRWGLSRTGTLLLAPPARCARRA). The residue at position 90 (Gln-90) is an N5-methylglutamine.

The protein belongs to the prokaryotic/mitochondrial release factor family. Mitochondrion-specific ribosomal protein mL62 subfamily. In terms of assembly, component of the mitochondrial ribosome large subunit (39S) which comprises a 16S rRNA and about 50 distinct proteins. Post-translationally, methylation of glutamine in the GGQ triplet by HEMK1.

It is found in the mitochondrion. It carries out the reaction an N-acyl-L-alpha-aminoacyl-tRNA + H2O = an N-acyl-L-amino acid + a tRNA + H(+). In terms of biological role, essential peptidyl-tRNA hydrolase component of the mitochondrial large ribosomal subunit. Acts as a codon-independent translation release factor that has lost all stop codon specificity and directs the termination of translation in mitochondrion, possibly in case of abortive elongation. May be involved in the hydrolysis of peptidyl-tRNAs that have been prematurely terminated and thus in the recycling of stalled mitochondrial ribosomes. The chain is Large ribosomal subunit protein mL62 from Mus musculus (Mouse).